The chain runs to 526 residues: ATP synthase subunit alpha (526 aa).

Residue 171–178 participates in ATP binding; the sequence is GDRQTGKT.

This sequence belongs to the ATPase alpha/beta chains family. As to quaternary structure, F-type ATPases have 2 components, CF(1) - the catalytic core - and CF(0) - the membrane proton channel. CF(1) has five subunits: alpha(3), beta(3), gamma(1), delta(1), epsilon(1). CF(0) has four main subunits: a(1), b(1), b'(1) and c(9-12).

Its subcellular location is the cell inner membrane. It catalyses the reaction ATP + H2O + 4 H(+)(in) = ADP + phosphate + 5 H(+)(out). Functionally, produces ATP from ADP in the presence of a proton gradient across the membrane. The alpha chain is a regulatory subunit. This Chlorobium chlorochromatii (strain CaD3) protein is ATP synthase subunit alpha.